The sequence spans 388 residues: LL-diaminopimelate aminotransferase (388 aa).

2 residues coordinate substrate: tyrosine 16 and glycine 41. Residues tyrosine 70, 104–105, tyrosine 129, asparagine 179, tyrosine 210, and 239–241 each bind pyridoxal 5'-phosphate; these read SK and SLS. 3 residues coordinate substrate: lysine 105, tyrosine 129, and asparagine 179. Lysine 242 carries the N6-(pyridoxal phosphate)lysine modification. Position 250 (arginine 250) interacts with pyridoxal 5'-phosphate. Arginine 368 lines the substrate pocket.

Belongs to the class-I pyridoxal-phosphate-dependent aminotransferase family. LL-diaminopimelate aminotransferase subfamily. Homodimer. The cofactor is pyridoxal 5'-phosphate.

It carries out the reaction (2S,6S)-2,6-diaminopimelate + 2-oxoglutarate = (S)-2,3,4,5-tetrahydrodipicolinate + L-glutamate + H2O + H(+). It participates in amino-acid biosynthesis; L-lysine biosynthesis via DAP pathway; LL-2,6-diaminopimelate from (S)-tetrahydrodipicolinate (aminotransferase route): step 1/1. In terms of biological role, involved in the synthesis of meso-diaminopimelate (m-DAP or DL-DAP), required for both lysine and peptidoglycan biosynthesis. Catalyzes the direct conversion of tetrahydrodipicolinate to LL-diaminopimelate. The chain is LL-diaminopimelate aminotransferase from Maridesulfovibrio salexigens (strain ATCC 14822 / DSM 2638 / NCIMB 8403 / VKM B-1763) (Desulfovibrio salexigens).